A 419-amino-acid polypeptide reads, in one-letter code: Serine hydroxymethyltransferase (419 aa).

(6S)-5,6,7,8-tetrahydrofolate contacts are provided by residues Leu-120 and 124 to 126; that span reads GHL. Lys-229 carries the N6-(pyridoxal phosphate)lysine modification.

The protein belongs to the SHMT family. As to quaternary structure, homodimer. Pyridoxal 5'-phosphate serves as cofactor.

It localises to the cytoplasm. It catalyses the reaction (6R)-5,10-methylene-5,6,7,8-tetrahydrofolate + glycine + H2O = (6S)-5,6,7,8-tetrahydrofolate + L-serine. The protein operates within one-carbon metabolism; tetrahydrofolate interconversion. It participates in amino-acid biosynthesis; glycine biosynthesis; glycine from L-serine: step 1/1. Its function is as follows. Catalyzes the reversible interconversion of serine and glycine with tetrahydrofolate (THF) serving as the one-carbon carrier. This reaction serves as the major source of one-carbon groups required for the biosynthesis of purines, thymidylate, methionine, and other important biomolecules. Also exhibits THF-independent aldolase activity toward beta-hydroxyamino acids, producing glycine and aldehydes, via a retro-aldol mechanism. The chain is Serine hydroxymethyltransferase from Herpetosiphon aurantiacus (strain ATCC 23779 / DSM 785 / 114-95).